A 100-amino-acid chain; its full sequence is Small ribosomal subunit protein uS14c (100 aa).

The protein belongs to the universal ribosomal protein uS14 family. As to quaternary structure, part of the 30S ribosomal subunit.

Its subcellular location is the plastid. It is found in the chloroplast. Functionally, binds 16S rRNA, required for the assembly of 30S particles. This chain is Small ribosomal subunit protein uS14c, found in Nephroselmis olivacea (Green alga).